Here is a 318-residue protein sequence, read N- to C-terminus: Magnetosome protein MamM (318 aa).

The transmembrane domain (TMD) stretch occupies residues 1–210 (MRKSGCAVCS…FMDAYRGLMD (210 aa)). Transmembrane regions (helical) follow at residues 13–33 (IGWVGLAVSTVLMVMKAFVGL), 39–59 (AMLADAMYSLKDMLNALMVII), 81–101 (FILSMVVSVVFIVLTGYLLVH), and 117–137 (LIVLWAALVSIGVNVGMYFYS). Residues 211-318 (HTAGEAVQNR…DEVMLSKVDN (108 aa)) form a C-terminal domain (CTD) region. Fe cation is bound by residues Asp-249, His-264, His-285, and Glu-289.

Belongs to the cation diffusion facilitator (CDF) transporter (TC 2.A.4) family. As to quaternary structure, forms homodimers via its C-terminal domain (CTD) in the presence of metal cations. Interacts with MamB via their CTD. Isolated CTD forms homodimers.

It is found in the magnetosome membrane. The protein resides in the cell inner membrane. Functionally, essential for magnetosome formation; required for stable accumulation of MamB. May nucleate iron crystal formation. Probably binds and transports iron. Binds divalent cations, possibly up to 3 Zn(2+) per dimer in vitro, probably iron in vivo. One of 7 genes (mamLQBIEMO) able to induce magnetosome membrane biogenesis; coexpression of mamLQRBIEMO in a deletion of the 17 gene mamAB operon restores magnetosome vesicle formation but not magnetite biosynthesis. This Magnetospirillum gryphiswaldense (strain DSM 6361 / JCM 21280 / NBRC 15271 / MSR-1) protein is Magnetosome protein MamM.